A 464-amino-acid polypeptide reads, in one-letter code: Propanal dehydrogenase (CoA-propanoylating) (464 aa).

Residues 1–18 (MNTSELETLIRTILSEQL) are targets protein to the BMC.

This sequence belongs to the EutE/PduP family. Interacts with BMC shell proteins PduA and PduJ, which target this protein to BMC. Interacts with PduQ, probably via the N-terminus of PduQ. Interacts with PduK, probably with its BMC-containing N-terminus.

Its subcellular location is the bacterial microcompartment. The catalysed reaction is propanal + NAD(+) + CoA = propanoyl-CoA + NADH + H(+). Its pathway is polyol metabolism; 1,2-propanediol degradation. A CoA-acylating aldehyde dehydrogenase required for optimal 1,2-propanediol (1,2-PD) degradation. Optimizes growth in the bacterial microcompartment (BMC) dedicated to 1,2-PD degradation by minimizing propionaldehyde toxicity. Directly targeted to the BMC. NAD(+) and NADH are regenerated internally within the Pdu BMC by the PduP and PduQ enzymes, which reduce NAD(+) and oxidize NADH respectively, although there must also be cofactor transport across the BMC. In terms of biological role, the 1,2-PD-specific bacterial microcompartment (BMC) concentrates low levels of 1,2-PD catabolic enzymes, concentrates volatile reaction intermediates thus enhancing pathway flux and keeps the level of toxic, mutagenic propionaldehyde low. This chain is Propanal dehydrogenase (CoA-propanoylating), found in Salmonella typhimurium (strain LT2 / SGSC1412 / ATCC 700720).